A 121-amino-acid chain; its full sequence is Perlustrin-like protein (121 aa).

Residues 1-23 form the signal peptide; sequence MKFGVGFLLSCLVALNTVQNMLA. The region spanning 24–104 is the IGFBP N-terminal domain; the sequence is LSCLPCDFDT…FDFKGTCQES (81 aa). Intrachain disulfides connect cysteine 26-cysteine 52, cysteine 29-cysteine 54, cysteine 36-cysteine 55, cysteine 45-cysteine 58, cysteine 66-cysteine 79, and cysteine 73-cysteine 101. N-linked (GlcNAc...) asparagine glycans are attached at residues asparagine 68, asparagine 81, and asparagine 117.

Component of the acid-insoluble organic matrix of calcified layers of the shell (at protein level).

It is found in the secreted. The sequence is that of Perlustrin-like protein from Lottia gigantea (Giant owl limpet).